Consider the following 161-residue polypeptide: Regulator of ribonuclease activity A (161 aa).

Belongs to the RraA family. Homotrimer. Binds to both RNA-binding sites in the C-terminal region of Rne and to RhlB.

The protein localises to the cytoplasm. Its function is as follows. Globally modulates RNA abundance by binding to RNase E (Rne) and regulating its endonucleolytic activity. Can modulate Rne action in a substrate-dependent manner by altering the composition of the degradosome. Modulates RNA-binding and helicase activities of the degradosome. This chain is Regulator of ribonuclease activity A, found in Shigella boydii serotype 18 (strain CDC 3083-94 / BS512).